We begin with the raw amino-acid sequence, 2240 residues long: Nonribisomal peptide synthetase notE (2240 aa).

Residues 22-52 form a disordered region; it reads TETMRETLSSSSSPLSLSSITSPLSSASEPP. The segment covering 28–52 has biased composition (low complexity); it reads TLSSSSSPLSLSSITSPLSSASEPP. The adenylation 1 stretch occupies residues 85 to 484; the sequence is QQRCREAPES…GRKEGQVKIR (400 aa). The Carrier 1 domain maps to 616-692; it reads PPTTATEHAL…EQARKATPVS (77 aa). At Ser653 the chain carries O-(pantetheine 4'-phosphoryl)serine. Residues 732 to 1144 are condensation 1; that stretch reads EDIFPCTPLQ…DFASPQDRDL (413 aa). The segment at 1167–1564 is adenylation 2; sequence QEARQPSREA…GRRDTQLKLR (398 aa). The region spanning 1700-1776 is the Carrier 2 domain; that stretch reads PVSRGPELRL…ELARCTGEEP (77 aa). Position 1737 is an O-(pantetheine 4'-phosphoryl)serine (Ser1737). Positions 1845 to 2159 are condensation 2; that stretch reads FSFHGEVSVE…ILQHQNIDMD (315 aa). A disordered region spans residues 2008-2027; sequence CTMPVKATPPTDSDDSRPSA.

This sequence belongs to the NRP synthetase family.

The enzyme catalyses L-proline + L-tryptophan + 2 ATP = brevianamide F + 2 AMP + 2 diphosphate + 2 H(+). The protein operates within alkaloid biosynthesis. In terms of biological role, nonribisomal peptide synthetase; part of the gene cluster that mediates the biosynthesis of notoamide, a fungal indole alkaloid that belongs to a family of natural products containing a characteristic bicyclo[2.2.2]diazaoctane core. The first step of notoamide biosynthesis involves coupling of L-proline and L-tryptophan by the bimodular NRPS notE, to produce cyclo-L-tryptophan-L-proline called brevianamide F. The reverse prenyltransferase notF then acts as a deoxybrevianamide E synthase and converts brevianamide F to deoxybrevianamide E via reverse prenylation at C-2 of the indole ring leading to the bicyclo[2.2.2]diazaoctane core. Deoxybrevianamide E is further hydroxylated at C-6 of the indole ring, likely catalyzed by the cytochrome P450 monooxygenase notG, to yield 6-hydroxy-deoxybrevianamide E. 6-hydroxy-deoxybrevianamide E is a specific substrate of the prenyltransferase notC for normal prenylation at C-7 to produce 6-hydroxy-7-prenyl-deoxybrevianamide, also called notoamide S. As the proposed pivotal branching point in notoamide biosynthesis, notoamide S can be diverted to notoamide E through an oxidative pyran ring closure putatively catalyzed by either notH cytochrome P450 monooxygenase or the notD FAD-linked oxidoreductase. This step would be followed by an indole 2,3-epoxidation-initiated pinacol-like rearrangement catalyzed by the notB FAD-dependent monooxygenase leading to the formation of notoamide C and notoamide D. On the other hand notoamide S is converted to notoamide T by notH (or notD), a bifunctional oxidase that also functions as the intramolecular Diels-Alderase responsible for generation of (+)-notoamide T. To generate antipodal (-)-notoaminide T, notH' (or notD') in Aspergillus versicolor is expected to catalyze a Diels-Alder reaction leading to the opposite stereochemistry. The remaining oxidoreductase notD (or notH) likely catalyzes the oxidative pyran ring formation to yield (+)-stephacidin A. The FAD-dependent monooxygenase notI is highly similar to notB and is predicted to catalyze a similar conversion from (+)-stephacidin A to (-)-notoamide B via the 2,3-epoxidation of (+)-stephacidin A followed by a pinacol-type rearrangement. Finally, it remains unclear which enzyme could be responsible for the final hydroxylation steps leading to notoamide A and sclerotiamide. The protein is Nonribisomal peptide synthetase notE of Aspergillus sp. (strain MF297-2).